We begin with the raw amino-acid sequence, 669 residues long: Dymeclin (669 aa).

Gly-2 is lipidated: N-myristoyl glycine.

Belongs to the dymeclin family. In terms of processing, myristoylated in vitro; myristoylation is not essential for protein targeting to Golgi compartment.

The protein resides in the cytoplasm. The protein localises to the golgi apparatus. In terms of biological role, necessary for correct organization of Golgi apparatus. This chain is Dymeclin (DYM), found in Gallus gallus (Chicken).